Reading from the N-terminus, the 705-residue chain is Elongation factor G (705 aa).

A tr-type G domain is found at 8 to 290; sequence ERYRNFGIMA…GVVHLLPSPA (283 aa). GTP-binding positions include 17-24, 88-92, and 142-145; these read AHIDAGKT, DTPGH, and NKMD. The disordered stretch occupies residues 290-309; the sequence is ADRPPVQGIDEDEKEDTRAA.

Belongs to the TRAFAC class translation factor GTPase superfamily. Classic translation factor GTPase family. EF-G/EF-2 subfamily.

It localises to the cytoplasm. Functionally, catalyzes the GTP-dependent ribosomal translocation step during translation elongation. During this step, the ribosome changes from the pre-translocational (PRE) to the post-translocational (POST) state as the newly formed A-site-bound peptidyl-tRNA and P-site-bound deacylated tRNA move to the P and E sites, respectively. Catalyzes the coordinated movement of the two tRNA molecules, the mRNA and conformational changes in the ribosome. The sequence is that of Elongation factor G from Xanthomonas euvesicatoria pv. vesicatoria (strain 85-10) (Xanthomonas campestris pv. vesicatoria).